The sequence spans 40 residues: Photosystem II reaction center protein J (40 aa).

The chain crosses the membrane as a helical span at residues 8–28 (IPLWIIGTVTGIFGIGLIGIF).

This sequence belongs to the PsbJ family. In terms of assembly, PSII is composed of 1 copy each of membrane proteins PsbA, PsbB, PsbC, PsbD, PsbE, PsbF, PsbH, PsbI, PsbJ, PsbK, PsbL, PsbM, PsbT, PsbX, PsbY, PsbZ, Psb30/Ycf12, at least 3 peripheral proteins of the oxygen-evolving complex and a large number of cofactors. It forms dimeric complexes.

The protein localises to the plastid membrane. One of the components of the core complex of photosystem II (PSII). PSII is a light-driven water:plastoquinone oxidoreductase that uses light energy to abstract electrons from H(2)O, generating O(2) and a proton gradient subsequently used for ATP formation. It consists of a core antenna complex that captures photons, and an electron transfer chain that converts photonic excitation into a charge separation. The chain is Photosystem II reaction center protein J from Cuscuta reflexa (Southern Asian dodder).